We begin with the raw amino-acid sequence, 551 residues long: Probable CoA ligase CCL5 (551 aa).

Residues 204 to 212, 345 to 350, D431, 443 to 446, and K537 each bind ATP; these read SSGTTGASK, QGYGLT, and VVDR. Positions 274–345 are SBD1; the sequence is EIHEMLSAIE…ENYPTVSILQ (72 aa). The tract at residues 346 to 410 is SBD2; the sequence is GYGLTESTGI…LRGPTIMKGY (65 aa).

Belongs to the ATP-dependent AMP-binding enzyme family. Mostly expressed at low levels in glandular trichomes (lupulin glands) after flowering, and, to a lower extent, in stems, leaves, cones and flowers.

It localises to the cytoplasm. The protein localises to the cytosol. The sequence is that of Probable CoA ligase CCL5 from Humulus lupulus (European hop).